Here is a 223-residue protein sequence, read N- to C-terminus: Cytolethal distending toxin subunit A (223 aa).

Positions 1-15 (MKKFLPSLLLMGSVA) are cleaved as a signal peptide. C16 carries the N-palmitoyl cysteine lipid modification. C16 carries the S-diacylglycerol cysteine lipid modification. The tract at residues 20-48 (QRMNDYSQPESQSDLAPKSSTIQPQPQPL) is disordered. Positions 91–102 (WALAKRNWLWAY) are mediates binding to target cells. One can recognise a Ricin B-type lectin domain in the interval 123 to 212 (HREYFRFVNQ…EPSRDQTWYL (90 aa)).

As to quaternary structure, heterotrimer of 3 subunits, CdtA, CdtB and CdtC.

The protein resides in the cell outer membrane. Functionally, CDTs are cytotoxins which induce host cell distension, growth arrest in G2/M phase, nucleus swelling, and chromatin fragmentation in HeLa cells. CdtA, along with CdtC, probably forms a heterodimeric subunit required for the delivery of CdtB. The protein is Cytolethal distending toxin subunit A (cdtA) of Haemophilus ducreyi (strain 35000HP / ATCC 700724).